Consider the following 221-residue polypeptide: Serine/arginine-rich splicing factor 2 (221 aa).

Residues 14–92 (TSLKVDNLTY…RELRVQMARY (79 aa)) form the RRM domain. The tract at residues 91 to 221 (RYGRPPDSHH…SPEEEGAVSS (131 aa)) is disordered. 2 stretches are compositionally biased toward basic residues: residues 117–171 (RRSR…RSKS) and 179–189 (SRSRSRSRSRS).

This sequence belongs to the splicing factor SR family. Extensively phosphorylated on serine residues in the RS domain.

The protein resides in the nucleus. Necessary for the splicing of pre-mRNA. It is required for formation of the earliest ATP-dependent splicing complex and interacts with spliceosomal components bound to both the 5'- and 3'-splice sites during spliceosome assembly. It also is required for ATP-dependent interactions of both U1 and U2 snRNPs with pre-mRNA. The protein is Serine/arginine-rich splicing factor 2 (SRSF2) of Gallus gallus (Chicken).